The chain runs to 299 residues: Pyridoxal 5'-phosphate synthase subunit PdxS (299 aa).

Aspartate 24 is a D-ribose 5-phosphate binding site. The active-site Schiff-base intermediate with D-ribose 5-phosphate is lysine 81. Residue glycine 153 participates in D-ribose 5-phosphate binding. Arginine 165 lines the D-glyceraldehyde 3-phosphate pocket. Residues glycine 219 and 240-241 (GS) each bind D-ribose 5-phosphate.

This sequence belongs to the PdxS/SNZ family. In the presence of PdxT, forms a dodecamer of heterodimers.

The catalysed reaction is aldehydo-D-ribose 5-phosphate + D-glyceraldehyde 3-phosphate + L-glutamine = pyridoxal 5'-phosphate + L-glutamate + phosphate + 3 H2O + H(+). The protein operates within cofactor biosynthesis; pyridoxal 5'-phosphate biosynthesis. Functionally, catalyzes the formation of pyridoxal 5'-phosphate from ribose 5-phosphate (RBP), glyceraldehyde 3-phosphate (G3P) and ammonia. The ammonia is provided by the PdxT subunit. Can also use ribulose 5-phosphate and dihydroxyacetone phosphate as substrates, resulting from enzyme-catalyzed isomerization of RBP and G3P, respectively. The protein is Pyridoxal 5'-phosphate synthase subunit PdxS of Methanococcus vannielii (strain ATCC 35089 / DSM 1224 / JCM 13029 / OCM 148 / SB).